Reading from the N-terminus, the 284-residue chain is Tropomyosin Lep s 1.0101 (284 aa).

Residues 1–273 (MEAIKKKMQA…KDRYRALADE (273 aa)) are a coiled coil. A compositionally biased stretch (basic and acidic residues) spans 155–171 (AEDADGKSDEVSRKMAQ). The tract at residues 155 to 187 (AEDADGKSDEVSRKMAQVEDDLEVAEDRVKSGD) is disordered.

It belongs to the tropomyosin family. Homodimer.

Tropomyosin, in association with the troponin complex, plays a central role in the calcium dependent regulation of muscle contraction. This is Tropomyosin Lep s 1.0101 from Lepisma saccharinum (Silverfish).